The primary structure comprises 213 residues: Putative 3-methyladenine DNA glycosylase (213 aa).

This sequence belongs to the DNA glycosylase MPG family.

The protein is Putative 3-methyladenine DNA glycosylase of Paraburkholderia phytofirmans (strain DSM 17436 / LMG 22146 / PsJN) (Burkholderia phytofirmans).